The sequence spans 665 residues: non-specific serine/threonine protein kinase (665 aa).

Residues 145–597 form the Protein kinase domain; that stretch reads FDVHCRIGSG…AEEALKHPFF (453 aa). ATP contacts are provided by residues 151–159 and lysine 181; that span reads IGSGTFSTV. Catalysis depends on aspartate 268, which acts as the Proton acceptor.

Belongs to the protein kinase superfamily. Ser/Thr protein kinase family. In terms of assembly, interacts with chif (via N-terminus).

The enzyme catalyses L-seryl-[protein] + ATP = O-phospho-L-seryl-[protein] + ADP + H(+). It catalyses the reaction L-threonyl-[protein] + ATP = O-phospho-L-threonyl-[protein] + ADP + H(+). Its function is as follows. Probable serine/threonine protein kinase that forms a complex with the N-terminal peptide of the chiffon protein and may be involved in regulating meiotic processes in the male testis. The sequence is that of non-specific serine/threonine protein kinase from Drosophila melanogaster (Fruit fly).